Consider the following 374-residue polypeptide: Probable ethanolamine kinase (374 aa).

2 residues coordinate ATP: Arg-93 and Asp-252.

It belongs to the choline/ethanolamine kinase family.

The catalysed reaction is ethanolamine + ATP = phosphoethanolamine + ADP + H(+). It functions in the pathway phospholipid metabolism; phosphatidylethanolamine biosynthesis; phosphatidylethanolamine from ethanolamine: step 1/3. Involved in phospholipid biosynthesis. Catalyzes the first step in phosphatidylethanolamine biosynthesis. In Arabidopsis thaliana (Mouse-ear cress), this protein is Probable ethanolamine kinase (EMB1187).